Reading from the N-terminus, the 138-residue chain is Histone H2B.4 (138 aa).

Over residues 1–39 (MAPKAAEKKPAEKKPAGKAPAEKLPKAEKKISKDAGGSE) the composition is skewed to basic and acidic residues. Residues 1–48 (MAPKAAEKKPAEKKPAGKAPAEKLPKAEKKISKDAGGSEKKKKKSKKS) form a disordered region. N,N,N-trimethylalanine; alternate is present on A2. Residue A2 is modified to N,N-dimethylalanine; alternate. An N-methylalanine; alternate modification is found at A2. K4 bears the N6-methyllysine mark. K8 and K13 each carry N6-acetyllysine. K14 bears the N6,N6-dimethyllysine mark. 4 positions are modified to N6-acetyllysine: K18, K23, K29, and K30. A Glycyl lysine isopeptide (Lys-Gly) (interchain with G-Cter in ubiquitin) cross-link involves residue K135.

It belongs to the histone H2B family. In terms of assembly, the nucleosome is a histone octamer containing two molecules each of H2A, H2B, H3 and H4 assembled in one H3-H4 heterotetramer and two H2A-H2B heterodimers. The octamer wraps approximately 147 bp of DNA. Post-translationally, can be acetylated to form H2BK6ac, H2BK33ac and H2BK34ac. In terms of processing, monoubiquitinated by BRE1 to form H2BK143ub1 and deubiquitinated by UBP26. Required for heterochromatic histone H3 di- and trimethylation at H3K4me. May give a specific tag for epigenetic transcriptional activation.

Its subcellular location is the nucleus. It is found in the chromosome. Functionally, core component of nucleosome. Nucleosomes wrap and compact DNA into chromatin, limiting DNA accessibility to the cellular machineries which require DNA as a template. Histones thereby play a central role in transcription regulation, DNA repair, DNA replication and chromosomal stability. DNA accessibility is regulated via a complex set of post-translational modifications of histones, also called histone code, and nucleosome remodeling. The protein is Histone H2B.4 of Arabidopsis thaliana (Mouse-ear cress).